Reading from the N-terminus, the 161-residue chain is Nucleotide-binding protein Glov_3198 (161 aa).

It belongs to the YajQ family.

In terms of biological role, nucleotide-binding protein. The protein is Nucleotide-binding protein Glov_3198 of Trichlorobacter lovleyi (strain ATCC BAA-1151 / DSM 17278 / SZ) (Geobacter lovleyi).